A 182-amino-acid chain; its full sequence is Adenine phosphoribosyltransferase (182 aa).

The protein belongs to the purine/pyrimidine phosphoribosyltransferase family. Homodimer.

It localises to the cytoplasm. It carries out the reaction AMP + diphosphate = 5-phospho-alpha-D-ribose 1-diphosphate + adenine. Its pathway is purine metabolism; AMP biosynthesis via salvage pathway; AMP from adenine: step 1/1. Its function is as follows. Catalyzes a salvage reaction resulting in the formation of AMP, that is energically less costly than de novo synthesis. In Streptomyces galbus, this protein is Adenine phosphoribosyltransferase.